Here is a 110-residue protein sequence, read N- to C-terminus: Large ribosomal subunit protein uL22 (110 aa).

The protein belongs to the universal ribosomal protein uL22 family. Part of the 50S ribosomal subunit.

Its function is as follows. This protein binds specifically to 23S rRNA; its binding is stimulated by other ribosomal proteins, e.g. L4, L17, and L20. It is important during the early stages of 50S assembly. It makes multiple contacts with different domains of the 23S rRNA in the assembled 50S subunit and ribosome. In terms of biological role, the globular domain of the protein is located near the polypeptide exit tunnel on the outside of the subunit, while an extended beta-hairpin is found that lines the wall of the exit tunnel in the center of the 70S ribosome. The polypeptide is Large ribosomal subunit protein uL22 (Marinobacter nauticus (strain ATCC 700491 / DSM 11845 / VT8) (Marinobacter aquaeolei)).